Here is a 353-residue protein sequence, read N- to C-terminus: MEKTLETVPLERKKREKEQFRKLFIGGLSFETTEESLRNYYEQWGKLTDCVVMRDPASKRSRGFGFVTFSSMAEVDAAMAARPHSIDGRVVEPKRAVAREESGKPGAHVTVKKLFVGGIKEDTEEHHLRDYFEEYGKIDTIEIITDRQSGKKRGFGFVTFDDHDPVDKIVLQKHHTINGHNAEVRKALSRQEMQEVQSSRSGRGGNFGFGDSRGGGGNFGPGPGSNFRGGSDGYGSGRGFGDGYNGYGGGPGGGNFGGSPGYGGGRGGYGGGGPGYGNQGGGYGGGYDNYGGGNYGSGNYNDFGNYNQQPSNYGPMKSGNFGGSRNMGGPYGGGNYGPGGSGGSGGYGGRSRY.

N-acetylmethionine is present on Met1. Phosphothreonine is present on Thr4. A Nuclear localization signal motif is present at residues 9–15 (PLERKKR). RRM domains lie at 21 to 104 (RKLF…ESGK) and 112 to 191 (KKLF…LSRQ). A Glycyl lysine isopeptide (Lys-Gly) (interchain with G-Cter in SUMO2) cross-link involves residue Lys22. At Ser29 the chain carries Phosphoserine. Arg38 bears the Omega-N-methylarginine mark. Ser85 bears the Phosphoserine mark. Lys104 carries the N6,N6-dimethyllysine; alternate modification. Lys104 participates in a covalent cross-link: Glycyl lysine isopeptide (Lys-Gly) (interchain with G-Cter in SUMO2); alternate. Glycyl lysine isopeptide (Lys-Gly) (interchain with G-Cter in SUMO2) cross-links involve residues Lys112, Lys120, and Lys137. Thr140 is modified (phosphothreonine). Ser149 is subject to Phosphoserine. Residue Lys152 forms a Glycyl lysine isopeptide (Lys-Gly) (interchain with G-Cter in SUMO2) linkage. At Thr159 the chain carries Phosphothreonine. Residues Lys168 and Lys173 each participate in a glycyl lysine isopeptide (Lys-Gly) (interchain with G-Cter in SUMO2); alternate cross-link. Lys168 and Lys173 each carry N6-acetyllysine; alternate. A Phosphothreonine modification is found at Thr176. A Glycyl lysine isopeptide (Lys-Gly) (interchain with G-Cter in SUMO2) cross-link involves residue Lys186. Phosphoserine occurs at positions 189 and 201. A disordered region spans residues 193 to 353 (MQEVQSSRSG…SGGYGGRSRY (161 aa)). Residues 202-223 (GRGGNFGFGDSRGGGGNFGPGP) are compositionally biased toward gly residues. Residue Arg203 is modified to Asymmetric dimethylarginine; alternate. Arg203 carries the post-translational modification Dimethylated arginine; alternate. Position 203 is an omega-N-methylarginine; alternate (Arg203). Residue Ser212 is modified to Phosphoserine. Position 213 is an asymmetric dimethylarginine; alternate (Arg213). Arg213 carries the post-translational modification Dimethylated arginine; alternate. Arg213 bears the Omega-N-methylarginine; alternate mark. Phosphoserine is present on Ser225. Residue Arg228 is modified to Omega-N-methylarginine. 2 positions are modified to phosphoserine: Ser231 and Ser236. At Arg238 the chain carries Omega-N-methylarginine. Ser259 is subject to Phosphoserine. Residue Arg266 is modified to Asymmetric dimethylarginine; alternate. At Arg266 the chain carries Omega-N-methylarginine; alternate. The segment at 308–347 (QQPSNYGPMKSGNFGGSRNMGGPYGGGNYGPGGSGGSGGY) is nuclear targeting sequence. The span at 320-353 (NFGGSRNMGGPYGGGNYGPGGSGGSGGYGGRSRY) shows a compositional bias: gly residues. The residue at position 324 (Ser324) is a Phosphoserine. Arg325 carries the omega-N-methylarginine modification. Tyr331 carries the phosphotyrosine modification. 2 positions are modified to phosphoserine: Ser341 and Ser344. Phosphotyrosine is present on Tyr347. At Arg350 the chain carries Omega-N-methylarginine.

Identified in the spliceosome C complex. Identified in a IGF2BP1-dependent mRNP granule complex containing untranslated mRNAs. Interacts with IGF2BP1. Interacts with C9orf72. Interacts with DGCR8. Interacts with TARDBP. Interacts with CKAP5. Interacts with PPIA/CYPA. Interacts (via C-terminus) with FAM76B; the interaction results in retention of HNRNPA2B1 in the nucleus and inhibition of the NF-kappa-B-mediated inflammatory pathway. Interacts with NF-kappa-B inhibitors NFKBIA and NFKBIE; the interaction may be mediated by the RRM2 domain of HNRNPA2B1, and HNRNPA2B1 may interact simultaneously with FAM76B and either NFKBIA or NFKBIE to form a complex. Sumoylated in exosomes, promoting miRNAs-binding. In terms of processing, asymmetric dimethylation at Arg-266 constitutes the major methylation site. According to a report, methylation affects subcellular location and promotes nuclear localization. According to another report, methylation at Arg-266 does not influence nucleocytoplasmic shuttling.

The protein localises to the nucleus. Its subcellular location is the nucleoplasm. It localises to the cytoplasmic granule. The protein resides in the secreted. It is found in the extracellular exosome. Functionally, heterogeneous nuclear ribonucleoprotein (hnRNP) that associates with nascent pre-mRNAs, packaging them into hnRNP particles. The hnRNP particle arrangement on nascent hnRNA is non-random and sequence-dependent and serves to condense and stabilize the transcripts and minimize tangling and knotting. Packaging plays a role in various processes such as transcription, pre-mRNA processing, RNA nuclear export, subcellular location, mRNA translation and stability of mature mRNAs. Forms hnRNP particles with at least 20 other different hnRNP and heterogeneous nuclear RNA in the nucleus. Involved in transport of specific mRNAs to the cytoplasm in oligodendrocytes and neurons: acts by specifically recognizing and binding the A2RE (21 nucleotide hnRNP A2 response element) or the A2RE11 (derivative 11 nucleotide oligonucleotide) sequence motifs present on some mRNAs, and promotes their transport to the cytoplasm. Specifically binds single-stranded telomeric DNA sequences, protecting telomeric DNA repeat against endonuclease digestion. Also binds other RNA molecules, such as primary miRNA (pri-miRNAs): acts as a nuclear 'reader' of the N6-methyladenosine (m6A) mark by specifically recognizing and binding a subset of nuclear m6A-containing pri-miRNAs. Binding to m6A-containing pri-miRNAs promotes pri-miRNA processing by enhancing binding of DGCR8 to pri-miRNA transcripts. Involved in miRNA sorting into exosomes following sumoylation, possibly by binding (m6A)-containing pre-miRNAs. Acts as a regulator of efficiency of mRNA splicing, possibly by binding to m6A-containing pre-mRNAs. Plays a role in the splicing of pyruvate kinase PKM by binding repressively to sequences flanking PKM exon 9, inhibiting exon 9 inclusion and resulting in exon 10 inclusion and production of the PKM M2 isoform. This Pongo abelii (Sumatran orangutan) protein is Heterogeneous nuclear ribonucleoproteins A2/B1 (HNRNPA2B1).